A 247-amino-acid chain; its full sequence is Adenylyl-sulfate kinase (247 aa).

The interval 1 to 24 (MSQSNSDDSASSSTQQAGDGQDDV) is disordered. 55 to 62 (GLSGCGKS) provides a ligand contact to ATP. The active-site Phosphoserine intermediate is S146.

The protein belongs to the APS kinase family.

It carries out the reaction adenosine 5'-phosphosulfate + ATP = 3'-phosphoadenylyl sulfate + ADP + H(+). It participates in sulfur metabolism; hydrogen sulfide biosynthesis; sulfite from sulfate: step 2/3. Functionally, catalyzes the synthesis of activated sulfate. The protein is Adenylyl-sulfate kinase of Rhodopirellula baltica (strain DSM 10527 / NCIMB 13988 / SH1).